The chain runs to 597 residues: Putative lipase ATG15 (597 aa).

Topologically, residues 1–15 (MTLEKNRHANKGTSW) are cytoplasmic. Residues 16–36 (TWMIYKFVVGVITVAILVLFI) traverse the membrane as a helical; Signal-anchor for type II membrane protein segment. Residues 37-597 (TQKSVSQAQD…DDDEDTFERK (561 aa)) are Lumenal-facing. N-linked (GlcNAc...) asparagine glycosylation is found at Asn195, Asn262, and Asn346. Ser364 serves as the catalytic Charge relay system. N-linked (GlcNAc...) asparagine glycosylation is present at Asn481. Positions 507 to 570 (EKDEPKLPNP…PTDQDPPKKC (64 aa)) are disordered. The segment covering 519 to 554 (SSSKSTLSTKTTSLKSSSTYSGSTSSSTVTKTTQTS) has biased composition (low complexity).

Belongs to the AB hydrolase superfamily. Lipase family. As to quaternary structure, binds to both phosphatidylinositol (PI) and phosphatidylinositol 3,5-bisphosphate (PIP2).

The protein localises to the endosome. It is found in the multivesicular body membrane. The protein resides in the prevacuolar compartment membrane. It catalyses the reaction a triacylglycerol + H2O = a diacylglycerol + a fatty acid + H(+). In terms of biological role, lipase which is essential for lysis of subvacuolar cytoplasm to vacuole targeted bodies and intravacuolar autophagic bodies. Involved in the lysis of intravacuolar multivesicular body (MVB) vesicles. The intravacuolar membrane disintegration by ATG15 is critical to life span extension. This chain is Putative lipase ATG15 (ATG15), found in Candida albicans (strain SC5314 / ATCC MYA-2876) (Yeast).